Here is a 124-residue protein sequence, read N- to C-terminus: Small ribosomal subunit protein uS12 (124 aa).

The segment at 1-30 is disordered; the sequence is MPTIQQLVRKGRRDKVAKVKTAALKGSPQR. The residue at position 89 (D89) is a 3-methylthioaspartic acid. The disordered stretch occupies residues 105-124; the sequence is QGVKNRKQARSRYGAKKEKS. Positions 108 to 118 are enriched in basic residues; sequence KNRKQARSRYG.

Belongs to the universal ribosomal protein uS12 family. In terms of assembly, part of the 30S ribosomal subunit. Contacts proteins S8 and S17. May interact with IF1 in the 30S initiation complex.

With S4 and S5 plays an important role in translational accuracy. Functionally, interacts with and stabilizes bases of the 16S rRNA that are involved in tRNA selection in the A site and with the mRNA backbone. Located at the interface of the 30S and 50S subunits, it traverses the body of the 30S subunit contacting proteins on the other side and probably holding the rRNA structure together. The combined cluster of proteins S8, S12 and S17 appears to hold together the shoulder and platform of the 30S subunit. In Mycobacterium intracellulare, this protein is Small ribosomal subunit protein uS12.